The primary structure comprises 453 residues: Chromosomal replication initiator protein DnaA (453 aa).

The interval 1–76 (MSGDAAALWP…LAWRQQLPAV (76 aa)) is domain I, interacts with DnaA modulators. The interval 76–115 (VRSVSVRGGVAATERAATLASVPLPTFDAPAAPAANPALL) is domain II. Residues 116 to 333 (GFDPRLSFDR…GALNKLLAYA (218 aa)) are domain III, AAA+ region. 4 residues coordinate ATP: Gly-160, Gly-162, Lys-163, and Thr-164. Positions 334–453 (ALTGARIDLM…IAAIRRSLNS (120 aa)) are domain IV, binds dsDNA.

The protein belongs to the DnaA family. As to quaternary structure, oligomerizes as a right-handed, spiral filament on DNA at oriC.

It is found in the cytoplasm. Functionally, plays an essential role in the initiation and regulation of chromosomal replication. ATP-DnaA binds to the origin of replication (oriC) to initiate formation of the DNA replication initiation complex once per cell cycle. Binds the DnaA box (a 9 base pair repeat at the origin) and separates the double-stranded (ds)DNA. Forms a right-handed helical filament on oriC DNA; dsDNA binds to the exterior of the filament while single-stranded (ss)DNA is stabiized in the filament's interior. The ATP-DnaA-oriC complex binds and stabilizes one strand of the AT-rich DNA unwinding element (DUE), permitting loading of DNA polymerase. After initiation quickly degrades to an ADP-DnaA complex that is not apt for DNA replication. Binds acidic phospholipids. This is Chromosomal replication initiator protein DnaA from Sphingopyxis alaskensis (strain DSM 13593 / LMG 18877 / RB2256) (Sphingomonas alaskensis).